The sequence spans 397 residues: Enoyl-[acyl-carrier-protein] reductase [NADH] (397 aa).

Residues 48–53 (GASTGY), 74–75 (FE), 111–112 (DA), and 139–140 (VA) each bind NAD(+). Position 225 (Tyr225) interacts with substrate. The active-site Proton donor is the Tyr235. NAD(+) is bound by residues Lys244 and 273 to 275 (VVT).

Belongs to the TER reductase family. Monomer.

It catalyses the reaction a 2,3-saturated acyl-[ACP] + NAD(+) = a (2E)-enoyl-[ACP] + NADH + H(+). It functions in the pathway lipid metabolism; fatty acid biosynthesis. Its function is as follows. Involved in the final reduction of the elongation cycle of fatty acid synthesis (FAS II). Catalyzes the reduction of a carbon-carbon double bond in an enoyl moiety that is covalently linked to an acyl carrier protein (ACP). This is Enoyl-[acyl-carrier-protein] reductase [NADH] from Burkholderia mallei (strain SAVP1).